Reading from the N-terminus, the 634-residue chain is Probable potassium transport system protein Kup 2 (634 aa).

12 helical membrane passes run 20 to 40 (FWTL…TSPL), 64 to 84 (VLSL…VLLI), 110 to 130 (FAAI…DAII), 148 to 168 (PGFD…LFLV), 174 to 194 (AAVA…MAVA), 224 to 244 (AGLL…ALYA), 258 to 278 (WLVL…AMLL), 290 to 310 (LLFP…ATII), 348 to 368 (IYIP…VFAF), 377 to 397 (AYGI…FFVM), 405 to 425 (AAVA…FLMA), and 430 to 450 (IVDG…VMVT).

It belongs to the HAK/KUP transporter (TC 2.A.72) family.

It is found in the cell inner membrane. The catalysed reaction is K(+)(in) + H(+)(in) = K(+)(out) + H(+)(out). Functionally, transport of potassium into the cell. Likely operates as a K(+):H(+) symporter. The chain is Probable potassium transport system protein Kup 2 from Rhodopseudomonas palustris (strain ATCC BAA-98 / CGA009).